Consider the following 568-residue polypeptide: Acetate--CoA ligase CCL3 (568 aa).

Residues 204–212 (TSGTTASPK), 340–345 (HTYGLS), Asp-437, 449–452 (IKDR), and Lys-547 each bind ATP. Residues 272 to 340 (TAKGVYSAIA…MSEKGFKVAH (69 aa)) form an SBD1 region. The interval 341 to 417 (TYGLSETYGP…MRGNAVMKGY (77 aa)) is SBD2.

It belongs to the ATP-dependent AMP-binding enzyme family. Mostly expressed in glandular trichomes (lupulin glands) after flowering and in old leaves, and, to a lower extent, in stems, young leaves, cones and flowers.

It is found in the cytoplasm. The protein localises to the cytosol. It catalyses the reaction acetate + ATP + CoA = acetyl-CoA + AMP + diphosphate. The enzyme catalyses propanoate + ATP + CoA = propanoyl-CoA + AMP + diphosphate. The catalysed reaction is butanoate + ATP + CoA = butanoyl-CoA + AMP + diphosphate. It carries out the reaction 3-methylbutanoate + ATP + CoA = 3-methylbutanoyl-CoA + AMP + diphosphate. It catalyses the reaction pentanoate + ATP + CoA = pentanoyl-CoA + AMP + diphosphate. The enzyme catalyses hexanoate + ATP + CoA = hexanoyl-CoA + AMP + diphosphate. The catalysed reaction is 2-methylpropanoate + ATP + CoA = 2-methylpropanoyl-CoA + AMP + diphosphate. It carries out the reaction 2-methylbutanoate + ATP + CoA = 2-methylbutanoyl-CoA + AMP + diphosphate. It catalyses the reaction 2-methylpentanoate + ATP + CoA = 2-methylpentanoyl-CoA + AMP + diphosphate. The enzyme catalyses 3-methylpentanoate + ATP + CoA = 3-methylpentanoyl-CoA + AMP + diphosphate. The catalysed reaction is 4-methylpentanoate + ATP + CoA = 4-methylpentanoyl-CoA + AMP + diphosphate. It functions in the pathway secondary metabolite biosynthesis. In terms of biological role, involved in the biosynthesis of prenylated phenolics natural products which contribute to the bitter taste of beer and display broad biological activities. Catalyzes the ligation of CoA on propanoate to produce propanoyl-CoA. Can also use 2-methylpropanoate (isobutyric acid), acetate, butanoate, isovalerate, pentanoate, hexanoate, 2-methylbutanoate, 2-methylpentanoate, 3-methylpentanoate and 4-methylpentanoate as substrates with a lower efficiency. Triggers the formation of very short chain acyl-CoAs from the corresponding fatty acids, including acetic acid, propanoic acid, butyric acid and its isomer. The protein is Acetate--CoA ligase CCL3 of Humulus lupulus (European hop).